Reading from the N-terminus, the 114-residue chain is Gas vesicle protein J1 (114 aa).

The alpha helix 1 stretch occupies residues 13 to 22; that stretch reads LAEMLEMLLD. Beta-strand stretches follow at residues 25–35 and 40–50; these read VVVNADIAVSV and LLGIELRAAIA. The Conserved in GvpM1/2 but not GvpA signature appears at 46 to 50; it reads RAAIA. Alpha helix regions lie at residues 52–72, 78–87, and 95–105; these read FETA…ERVE, SPDQSDPASE, and TNPLSDDSTPT. The interval 63 to 114 is disordered; the sequence is PTGTDMERVESAANISPDQSDPASETQSETESTNPLSDDSTPTASTSAEETK. The segment covering 75–98 has biased composition (polar residues); it reads ANISPDQSDPASETQSETESTNPL. Positions 99 to 114 are enriched in low complexity; the sequence is SDDSTPTASTSAEETK.

Belongs to the gas vesicle GvpA family. In terms of assembly, gvpF to GvpM interact with each other in vitro, and may form multi-subunit complex(es). Interacts with GvpA1.

Its subcellular location is the gas vesicle. In terms of biological role, proteins GvpF to GvpM might be involved in nucleating gas vesicle formation. Mutagenesis of residues 13-61 shows that almost none of them can be substituted and still make gas vesicles. A minor component of the gas vesicle. Gas vesicles are hollow, gas filled proteinaceous nanostructures found in several microbial planktonic microorganisms. They allow positioning of halobacteria at the optimal depth for growth in the poorly aerated, shallow brine pools of their habitat. Its function is as follows. Expression of a 9.5 kb p-vac DNA fragment containing 2 divergently transcribed regions (gvpD-gvpE-gvpF-gvpG-gvpH-gvpI-gvpJ-gvpK-gvpL-gvpM and gvpA-gvpC-gvpN-gvpO) allows H.volcanii to produce gas vesicles. All site-directed mutagenesis is tested in H.volcanii. A minimal gas vesicle can be made in H.volcanii by gvpA1-gvpO1 plus gvpF1-gvpG1-gvpJ1-gvpK1-gvpL1-gvpM1; lack of enough GvpJ1 prevents formation. A similar region restores gas vesicle production in H.halobium without the p-vac locus, but it still has the c-vac locus. The polypeptide is Gas vesicle protein J1 (gvpJ11) (Halobacterium salinarum (strain ATCC 700922 / JCM 11081 / NRC-1) (Halobacterium halobium)).